We begin with the raw amino-acid sequence, 360 residues long: Ribosomal RNA large subunit methyltransferase M (360 aa).

S-adenosyl-L-methionine-binding positions include serine 192, 225–228 (APGG), aspartate 244, aspartate 264, and aspartate 280. The active-site Proton acceptor is lysine 309.

The protein belongs to the class I-like SAM-binding methyltransferase superfamily. RNA methyltransferase RlmE family. RlmM subfamily. As to quaternary structure, monomer.

Its subcellular location is the cytoplasm. The enzyme catalyses cytidine(2498) in 23S rRNA + S-adenosyl-L-methionine = 2'-O-methylcytidine(2498) in 23S rRNA + S-adenosyl-L-homocysteine + H(+). Catalyzes the 2'-O-methylation at nucleotide C2498 in 23S rRNA. This chain is Ribosomal RNA large subunit methyltransferase M, found in Alkalilimnicola ehrlichii (strain ATCC BAA-1101 / DSM 17681 / MLHE-1).